The primary structure comprises 132 residues: MSMNDPLSDMIARIKNAATRKRAKVATPASKLRARVLDVLADEGYIRGYSLVEKPGAFPEFEIELKYFDGEPVIAEIARVSKPGRRVYSSIKDLKPIKNGLGISILSTPKGVMSDSAARDANVGGEVLCRVY.

The protein belongs to the universal ribosomal protein uS8 family. In terms of assembly, part of the 30S ribosomal subunit. Contacts proteins S5 and S12.

One of the primary rRNA binding proteins, it binds directly to 16S rRNA central domain where it helps coordinate assembly of the platform of the 30S subunit. In Caulobacter sp. (strain K31), this protein is Small ribosomal subunit protein uS8.